We begin with the raw amino-acid sequence, 453 residues long: Bifunctional protein GlmU (453 aa).

A pyrophosphorylase region spans residues 1 to 225 (MHAHVILAAG…AEEALGVNTR (225 aa)). UDP-N-acetyl-alpha-D-glucosamine-binding positions include 7 to 10 (LAAG), K21, Q72, and 77 to 78 (GT). D102 is a binding site for Mg(2+). UDP-N-acetyl-alpha-D-glucosamine contacts are provided by G138, E152, N167, and N223. N223 contributes to the Mg(2+) binding site. A linker region spans residues 226 to 246 (EELARVEGVLLRRLRAEWMGK). Positions 247-453 (GVRMILPETI…GYALRKLGEG (207 aa)) are N-acetyltransferase. UDP-N-acetyl-alpha-D-glucosamine is bound by residues R329 and K347. H359 acts as the Proton acceptor in catalysis. UDP-N-acetyl-alpha-D-glucosamine is bound by residues Y362 and N373. Acetyl-CoA is bound by residues A376, 382 to 383 (NY), S401, A419, and R436.

In the N-terminal section; belongs to the N-acetylglucosamine-1-phosphate uridyltransferase family. This sequence in the C-terminal section; belongs to the transferase hexapeptide repeat family. As to quaternary structure, homotrimer. Mg(2+) is required as a cofactor.

Its subcellular location is the cytoplasm. The enzyme catalyses alpha-D-glucosamine 1-phosphate + acetyl-CoA = N-acetyl-alpha-D-glucosamine 1-phosphate + CoA + H(+). The catalysed reaction is N-acetyl-alpha-D-glucosamine 1-phosphate + UTP + H(+) = UDP-N-acetyl-alpha-D-glucosamine + diphosphate. It functions in the pathway nucleotide-sugar biosynthesis; UDP-N-acetyl-alpha-D-glucosamine biosynthesis; N-acetyl-alpha-D-glucosamine 1-phosphate from alpha-D-glucosamine 6-phosphate (route II): step 2/2. The protein operates within nucleotide-sugar biosynthesis; UDP-N-acetyl-alpha-D-glucosamine biosynthesis; UDP-N-acetyl-alpha-D-glucosamine from N-acetyl-alpha-D-glucosamine 1-phosphate: step 1/1. Its pathway is bacterial outer membrane biogenesis; LPS lipid A biosynthesis. Its function is as follows. Catalyzes the last two sequential reactions in the de novo biosynthetic pathway for UDP-N-acetylglucosamine (UDP-GlcNAc). The C-terminal domain catalyzes the transfer of acetyl group from acetyl coenzyme A to glucosamine-1-phosphate (GlcN-1-P) to produce N-acetylglucosamine-1-phosphate (GlcNAc-1-P), which is converted into UDP-GlcNAc by the transfer of uridine 5-monophosphate (from uridine 5-triphosphate), a reaction catalyzed by the N-terminal domain. The protein is Bifunctional protein GlmU of Thermus thermophilus (strain ATCC BAA-163 / DSM 7039 / HB27).